A 129-amino-acid polypeptide reads, in one-letter code: Ribonuclease VapC12 (129 aa).

Mg(2+)-binding residues include aspartate 5 and aspartate 94.

Belongs to the PINc/VapC protein family. Requires Mg(2+) as cofactor.

Functionally, toxic component of a type II toxin-antitoxin (TA) system. An RNase. The cognate antitoxin is VapB12. The polypeptide is Ribonuclease VapC12 (Mycobacterium tuberculosis (strain CDC 1551 / Oshkosh)).